The primary structure comprises 469 residues: 3-isopropylmalate dehydratase large subunit (469 aa).

Cys349, Cys410, and Cys413 together coordinate [4Fe-4S] cluster.

Belongs to the aconitase/IPM isomerase family. LeuC type 1 subfamily. In terms of assembly, heterodimer of LeuC and LeuD. Requires [4Fe-4S] cluster as cofactor.

The catalysed reaction is (2R,3S)-3-isopropylmalate = (2S)-2-isopropylmalate. The protein operates within amino-acid biosynthesis; L-leucine biosynthesis; L-leucine from 3-methyl-2-oxobutanoate: step 2/4. In terms of biological role, catalyzes the isomerization between 2-isopropylmalate and 3-isopropylmalate, via the formation of 2-isopropylmaleate. In Neisseria meningitidis serogroup A / serotype 4A (strain DSM 15465 / Z2491), this protein is 3-isopropylmalate dehydratase large subunit.